A 152-amino-acid polypeptide reads, in one-letter code: Deoxyuridine 5'-triphosphate nucleotidohydrolase (152 aa).

Substrate contacts are provided by residues 72–74 (RSG), asparagine 85, and 89–91 (TID).

This sequence belongs to the dUTPase family. Mg(2+) is required as a cofactor.

It carries out the reaction dUTP + H2O = dUMP + diphosphate + H(+). It participates in pyrimidine metabolism; dUMP biosynthesis; dUMP from dCTP (dUTP route): step 2/2. In terms of biological role, this enzyme is involved in nucleotide metabolism: it produces dUMP, the immediate precursor of thymidine nucleotides and it decreases the intracellular concentration of dUTP so that uracil cannot be incorporated into DNA. In Rhodopseudomonas palustris (strain HaA2), this protein is Deoxyuridine 5'-triphosphate nucleotidohydrolase.